A 159-amino-acid polypeptide reads, in one-letter code: Eukaryotic translation initiation factor 5A-3 (159 aa).

Over residues 1-12 (MSDEEHQFESKA) the composition is skewed to basic and acidic residues. The disordered stretch occupies residues 1-21 (MSDEEHQFESKADAGASKTYP). At Lys-52 the chain carries Hypusine.

Belongs to the eIF-5A family. Post-translationally, lys-52 undergoes hypusination, a unique post-translational modification that consists in the addition of a butylamino group from spermidine to lysine side chain, leading to the formation of the unusual amino acid hypusine. eIF-5As are the only known proteins to undergo this modification, which is essential for their function.

Its function is as follows. Translation factor that promotes translation elongation and termination, particularly upon ribosome stalling at specific amino acid sequence contexts. Binds between the exit (E) and peptidyl (P) site of the ribosome and promotes rescue of stalled ribosome: specifically required for efficient translation of polyproline-containing peptides as well as other motifs that stall the ribosome. Acts as a ribosome quality control (RQC) cofactor by joining the RQC complex to facilitate peptidyl transfer during CAT tailing step. In Solanum lycopersicum (Tomato), this protein is Eukaryotic translation initiation factor 5A-3.